A 345-amino-acid polypeptide reads, in one-letter code: S-adenosylmethionine:tRNA ribosyltransferase-isomerase (345 aa).

It belongs to the QueA family. Monomer.

It localises to the cytoplasm. It catalyses the reaction 7-aminomethyl-7-carbaguanosine(34) in tRNA + S-adenosyl-L-methionine = epoxyqueuosine(34) in tRNA + adenine + L-methionine + 2 H(+). It participates in tRNA modification; tRNA-queuosine biosynthesis. Functionally, transfers and isomerizes the ribose moiety from AdoMet to the 7-aminomethyl group of 7-deazaguanine (preQ1-tRNA) to give epoxyqueuosine (oQ-tRNA). In Shewanella sp. (strain MR-7), this protein is S-adenosylmethionine:tRNA ribosyltransferase-isomerase.